We begin with the raw amino-acid sequence, 321 residues long: Mas-related G-protein coupled receptor member D (321 aa).

Topologically, residues 1–33 (MNQTLNSSGTVESALNYSRGSTVHTAYLVLSSL) are extracellular. Asparagine 2, asparagine 6, and asparagine 16 each carry an N-linked (GlcNAc...) asparagine glycan. A helical transmembrane segment spans residues 34–54 (AMFTCLCGMAGNSMVIWLLGF). Residues 55–59 (RMHRN) lie on the Cytoplasmic side of the membrane. The chain crosses the membrane as a helical span at residues 60 to 80 (PFCIYILNLAAADLLFLFSMA). Over 81-112 (STLSLETQPLVNTTDKVHELMKRLMYFAYTVG) the chain is Extracellular. Asparagine 92 is a glycosylation site (N-linked (GlcNAc...) asparagine). Residues 113–133 (LSLLTAISTQRCLSVLFPIWF) form a helical membrane-spanning segment. Over 134-142 (KCHRPRHLS) the chain is Cytoplasmic. Residues 143 to 163 (AWVCGLLWTLCLLMNGLTSSF) form a helical membrane-spanning segment. Over 164-184 (CSKFLKFNEDRCFRVDMVQAA) the chain is Extracellular. The chain crosses the membrane as a helical span at residues 185 to 205 (LIMGVLTPVMTLSSLTLFVWV). Over 206 to 218 (RRSSQQWRRQPTR) the chain is Cytoplasmic. A helical transmembrane segment spans residues 219–239 (LFVVVLASVLVFLICSLPLSI). At 240–257 (YWFVLYWLSLPPEMQVLC) the chain is on the extracellular side. The chain crosses the membrane as a helical span at residues 258–280 (FSLSRLSSSVSSSANPVIYFLVG). Topologically, residues 281-321 (SRRSHRLPTRSLGTVLQQALREEPELEGGETPTVGTNEMGA) are cytoplasmic. Residues 302-321 (EEPELEGGETPTVGTNEMGA) are disordered.

It belongs to the G-protein coupled receptor 1 family. Mas subfamily.

Its subcellular location is the cell membrane. May regulate nociceptor function and/or development, including the sensation or modulation of pain. Functions as a specific membrane receptor for beta-alanine. Beta-alanine at micromolar doses specifically evoked Ca(2+) influx in cells expressing the receptor. Beta-alanine decreases forskolin-stimulated cAMP production in cells expressing the receptor, suggesting that the receptor couples with G-protein G(q) and G(i). The sequence is that of Mas-related G-protein coupled receptor member D (MRGPRD) from Homo sapiens (Human).